A 94-amino-acid chain; its full sequence is uncharacterized protein (94 aa).

This is an uncharacterized protein from Treponema pallidum (strain Nichols).